The sequence spans 452 residues: Tissue alpha-L-fucosidase (452 aa).

Residues 1 to 17 (MLLLLLLLLVAAAQAVA) form the signal peptide. Residues asparagine 227, asparagine 254, asparagine 368, and asparagine 378 are each glycosylated (N-linked (GlcNAc...) asparagine).

This sequence belongs to the glycosyl hydrolase 29 family. As to quaternary structure, homotetramer.

It localises to the lysosome. It carries out the reaction an alpha-L-fucoside + H2O = L-fucose + an alcohol. It catalyses the reaction a neolactoside IV(2)-alpha-Fuc-nLc4Cer(d18:1(4E)) + H2O = a neolactoside nLc4Cer(d18:1(4E)) + L-fucose. The enzyme catalyses a neolactoside IV(2)-alpha-Fuc-nLc4Cer(d18:0) + H2O = a neolactoside nLc4Cer(d18:0) + L-fucose. In terms of biological role, alpha-L-fucosidase is responsible for hydrolyzing the alpha-1,6-linked fucose joined to the reducing-end N-acetylglucosamine of the carbohydrate moieties of glycoproteins. The sequence is that of Tissue alpha-L-fucosidase (Fuca1) from Mus musculus (Mouse).